The following is a 104-amino-acid chain: 2,4-dinitrotoluene dioxygenase system, ferredoxin component (104 aa).

Residues 1-21 (MSENWIDAAARDEVPRGRRDR) are disordered. One can recognise a Rieske domain in the interval 5 to 101 (WIDAAARDEV…VKIENMRVML (97 aa)). Positions 45, 47, 64, and 67 each coordinate [2Fe-2S] cluster.

Belongs to the bacterial ring-hydroxylating dioxygenase ferredoxin component family. As to quaternary structure, the 2,4-dinitrotoluene dioxygenase (DNTDO) multicomponent enzyme system is composed of an electron transfer component and a dioxygenase component (iron sulfur protein (ISP)). The electron transfer component is composed of a ferredoxin reductase (DntAa) and a ferredoxin (DntAb), and the dioxygenase component is formed of a large alpha subunit (DntAc) and a small beta subunit (DntAd). [2Fe-2S] cluster is required as a cofactor.

Component of the 2,4-dinitrotoluene dioxygenase (DNTDO) multicomponent enzyme system which catalyzes the incorporation of both atoms of molecular oxygen into 2,4-dinitrotoluene (DNT) to form 4-methyl-5-nitrocatechol (MNC) and nitrite. Functions as an intermediate electron transfer protein via a specific interaction with iron sulfur protein components (ISP)(DntAc and DntAd). Also able to convert naphthalene to cis-(1R,2S)-dihydroxy-1,2-dihydronaphthalene. This chain is 2,4-dinitrotoluene dioxygenase system, ferredoxin component, found in Burkholderia sp. (strain RASC).